The following is a 385-amino-acid chain: Protein pelota homolog (385 aa).

A Glycyl lysine isopeptide (Lys-Gly) (interchain with G-Cter in SUMO2) cross-link involves residue lysine 162. A phosphoserine mark is found at serine 374, serine 380, serine 381, and serine 382.

Belongs to the eukaryotic release factor 1 family. Pelota subfamily. Component of the Pelota-HBS1L complex, also named Dom34-Hbs1 complex, composed of PELO and HBS1L. Interacts with PINK1. Interacts with ABCE1. Interacts with CNOT4. It depends on a divalent metal cation as a cofactor.

It localises to the cytoplasm. Functionally, component of the Pelota-HBS1L complex, a complex that recognizes stalled ribosomes and triggers the No-Go Decay (NGD) pathway. In the Pelota-HBS1L complex, PELO recognizes ribosomes stalled at the 3' end of an mRNA and engages stalled ribosomes by destabilizing mRNA in the mRNA channel. Following mRNA extraction from stalled ribosomes by the SKI complex, the Pelota-HBS1L complex promotes recruitment of ABCE1, which drives the disassembly of stalled ribosomes, followed by degradation of damaged mRNAs as part of the NGD pathway. As part of the PINK1-regulated signaling, upon mitochondrial damage is recruited to the ribosome/mRNA-ribonucleoprotein complex associated to mitochondrial outer membrane thereby enabling the recruitment of autophagy receptors and induction of mitophagy. The protein is Protein pelota homolog (Pelo) of Rattus norvegicus (Rat).